The sequence spans 420 residues: UPF0053 protein HI_0107 (420 aa).

In terms of domain architecture, CNNM transmembrane spans 2–190 (DSIPLSTLFI…GEATPNEQHP (189 aa)). A run of 4 helical transmembrane segments spans residues 3–23 (SIPLSTLFIILIICLVLSAYF), 65–85 (FILIFNNLVNISASAIATVIG), 92–112 (AGVAIATGLLTFVMLVFSEIF), and 126–146 (FFSSHILTSLLKIFYPLVWLM). 2 consecutive CBS domains span residues 208-268 (MVPR…KNEF) and 273-333 (LIRA…FTTS).

Belongs to the UPF0053 family.

Its subcellular location is the cell membrane. This Haemophilus influenzae (strain ATCC 51907 / DSM 11121 / KW20 / Rd) protein is UPF0053 protein HI_0107.